The primary structure comprises 590 residues: 4-oxocyclohex-2-ene-1-carboxylate 5-dehydrogenase (590 aa).

Belongs to the FAD-dependent oxidoreductase 2 family. As to quaternary structure, forms multimers. It depends on FAD as a cofactor.

It carries out the reaction 4-oxocyclohex-2-ene-1-carboxylate + NAD(+) = 4-oxocyclohexa-2,5-diene-1-carboxylate + NADH + H(+). Its function is as follows. Desaturase involved in a cyclohexanecarboxylate (CHCA) degradation pathway. Probably catalyzes the conversion of 4-oxocyclohexenecarboxylate to 4-oxocyclohex-2,5-dienecarboxylate, which is spontaneously isomerized to 4-hydroxybenzoate (4-HBA). This chain is 4-oxocyclohex-2-ene-1-carboxylate 5-dehydrogenase, found in Sinomonas cyclohexanicum (Corynebacterium cyclohexanicum).